The sequence spans 503 residues: Lysine--tRNA ligase (503 aa).

Glu414 and Glu421 together coordinate Mg(2+).

Belongs to the class-II aminoacyl-tRNA synthetase family. As to quaternary structure, homodimer. Mg(2+) serves as cofactor.

The protein localises to the cytoplasm. The catalysed reaction is tRNA(Lys) + L-lysine + ATP = L-lysyl-tRNA(Lys) + AMP + diphosphate. The polypeptide is Lysine--tRNA ligase (Neisseria meningitidis serogroup A / serotype 4A (strain DSM 15465 / Z2491)).